The primary structure comprises 223 residues: Ribonuclease 3 (223 aa).

Positions 1 to 131 (MDGVDELLLR…LIGAVMVDQG (131 aa)) constitute an RNase III domain. Glu44 contacts Mg(2+). Asp48 is an active-site residue. Residues Asp117 and Glu120 each coordinate Mg(2+). Glu120 is an active-site residue. The DRBM domain maps to 157–220 (DPKTKLQKLT…AMSALASLEN (64 aa)).

It belongs to the ribonuclease III family. As to quaternary structure, homodimer. Mg(2+) serves as cofactor.

Its subcellular location is the cytoplasm. It carries out the reaction Endonucleolytic cleavage to 5'-phosphomonoester.. In terms of biological role, digests double-stranded RNA. Involved in the processing of primary rRNA transcript to yield the immediate precursors to the large and small rRNAs (23S and 16S). Processes some mRNAs, and tRNAs when they are encoded in the rRNA operon. Processes pre-crRNA and tracrRNA of type II CRISPR loci if present in the organism. In Tropheryma whipplei (strain Twist) (Whipple's bacillus), this protein is Ribonuclease 3.